Consider the following 334-residue polypeptide: Leucine-rich repeat-containing protein 26 (334 aa).

The signal sequence occupies residues 1 to 26 (MRGPSWSRPRPLLLLLLLLSPWPVWA). The Extracellular portion of the chain corresponds to 27–261 (QVSATASPSG…HCAQPLALRD (235 aa)). The LRRNT domain occupies 34–71 (PSGSLGAPDCPEVCTCVPGGLASCSALSLPAVPPGLSL). Disulfide bonds link Cys43–Cys49 and Cys47–Cys57. LRR repeat units lie at residues 72–93 (RLRALLLDHNRVRALPPGAFAG), 96–117 (ALQRLDLRENGLHSVHVRAFWG), 120–141 (ALQLLDLSANQLEALAPGTFAP), 144–167 (ALRNLSLAGNRLARLEPAALGALP), and 168–190 (LLRSLSLQDNELAALAPGLLGRL). A glycan (N-linked (GlcNAc...) asparagine) is linked at Asn147. The 55-residue stretch at 201–255 (NPWGCGCALRPLCAWLRRHPLPASEAETVLCVWPGRLTLSPLTAFSDAAFSHCAQ) folds into the LRRCT domain. 2 disulfides stabilise this stretch: Cys205–Cys231 and Cys207–Cys253. The helical transmembrane segment at 262–282 (LAVVYTLGPASFLVSLASCLA) threads the bilayer. Topologically, residues 283–334 (LGSGLTACRARRRRLRTAALRPPRPPDPNPDPDPHGCASPADPGSPAAAAQA) are cytoplasmic. The disordered stretch occupies residues 298 to 334 (RTAALRPPRPPDPNPDPDPHGCASPADPGSPAAAAQA). The segment covering 304–313 (PPRPPDPNPD) has biased composition (pro residues). A compositionally biased stretch (low complexity) spans 320–334 (ASPADPGSPAAAAQA).

Interacts with KCNMA1. In terms of tissue distribution, isoform 1 is expressed highly in normal prostate and salivary gland, very weakly in colon, pancreas, and intestine, and not at all in other tissues. Isoform 1 is expressed highly in many cancer cell lines and in breast cancer, pancreatic cancer and colon cancer. Isoform 2 is expressed in cancer cell lines.

It is found in the cell membrane. The protein localises to the cytoplasm. Its subcellular location is the cytoskeleton. Functionally, auxiliary protein of the large-conductance, voltage and calcium-activated potassium channel (BK alpha). Required for the conversion of BK alpha channels from a high-voltage to a low-voltage activated channel type in non-excitable cells. These are characterized by negative membrane voltages and constant low levels of calcium. The chain is Leucine-rich repeat-containing protein 26 (LRRC26) from Homo sapiens (Human).